The sequence spans 290 residues: Formamidopyrimidine-DNA glycosylase (290 aa).

Catalysis depends on Pro-2, which acts as the Schiff-base intermediate with DNA. The active-site Proton donor is the Glu-3. Lys-58 (proton donor; for beta-elimination activity) is an active-site residue. His-97, Arg-122, and Lys-165 together coordinate DNA. The FPG-type; atypical zinc-finger motif lies at 250-290 (KVYGREGEPCPGCDCDPVRTGGIARIVQSGRSTFYCPRHQR). Residue Arg-280 is the Proton donor; for delta-elimination activity of the active site.

It belongs to the FPG family. As to quaternary structure, monomer. Requires Zn(2+) as cofactor.

The catalysed reaction is Hydrolysis of DNA containing ring-opened 7-methylguanine residues, releasing 2,6-diamino-4-hydroxy-5-(N-methyl)formamidopyrimidine.. It catalyses the reaction 2'-deoxyribonucleotide-(2'-deoxyribose 5'-phosphate)-2'-deoxyribonucleotide-DNA = a 3'-end 2'-deoxyribonucleotide-(2,3-dehydro-2,3-deoxyribose 5'-phosphate)-DNA + a 5'-end 5'-phospho-2'-deoxyribonucleoside-DNA + H(+). In terms of biological role, involved in base excision repair of DNA damaged by oxidation or by mutagenic agents. Acts as a DNA glycosylase that recognizes and removes damaged bases. Has a preference for oxidized purines, such as 7,8-dihydro-8-oxoguanine (8-oxoG). Has AP (apurinic/apyrimidinic) lyase activity and introduces nicks in the DNA strand. Cleaves the DNA backbone by beta-delta elimination to generate a single-strand break at the site of the removed base with both 3'- and 5'-phosphates. This is Formamidopyrimidine-DNA glycosylase from Rhodospirillum centenum (strain ATCC 51521 / SW).